The following is a 345-amino-acid chain: MDTLTLPRPDDWHLHLRDGALMQAVAPQAAAVFSRAIIMPNLQPPVTTVEQAAAYRQRILGALPAGSTFEPLMTLYLTDKTSPEEIVRAAASGFVHAVKLYPAGATTHSDAGVTDLLLCYDALAAMEEQGLPLLIHGERTGPELDIFERETAFIDDVLQPLLDRHPRLKVVLEHVTTAVGAELVTGDDPRLAGTFTPQHLLYNRNDLLVGGLKPHYYCMPILKREADREALLEAATSGHPRVFLGTDSAPHPRGAKESACGCAGCYTAPIALSLYAEAFEAAGALERLADFAGRNGPAFYGLPVNPETVTLERAPLEVPASYPGGDEPVVPLRAGESLAWRLHQP.

Zn(2+)-binding residues include His-13 and His-15. Residues 15–17 and Asn-41 contribute to the substrate site; that span reads HLR. Residues Lys-99, His-136, His-174, and Asp-247 each contribute to the Zn(2+) site. Lys-99 bears the N6-carboxylysine mark. Position 136 (His-136) interacts with substrate. Asp-247 is an active-site residue. The substrate site is built by His-251 and Ala-263.

Belongs to the metallo-dependent hydrolases superfamily. DHOase family. Class II DHOase subfamily. In terms of assembly, homodimer. Zn(2+) serves as cofactor.

It catalyses the reaction (S)-dihydroorotate + H2O = N-carbamoyl-L-aspartate + H(+). The protein operates within pyrimidine metabolism; UMP biosynthesis via de novo pathway; (S)-dihydroorotate from bicarbonate: step 3/3. Its function is as follows. Catalyzes the reversible cyclization of carbamoyl aspartate to dihydroorotate. The chain is Dihydroorotase from Halorhodospira halophila (strain DSM 244 / SL1) (Ectothiorhodospira halophila (strain DSM 244 / SL1)).